The sequence spans 170 residues: Adenine phosphoribosyltransferase (170 aa).

Belongs to the purine/pyrimidine phosphoribosyltransferase family. As to quaternary structure, homodimer.

Its subcellular location is the cytoplasm. It catalyses the reaction AMP + diphosphate = 5-phospho-alpha-D-ribose 1-diphosphate + adenine. Its pathway is purine metabolism; AMP biosynthesis via salvage pathway; AMP from adenine: step 1/1. In terms of biological role, catalyzes a salvage reaction resulting in the formation of AMP, that is energically less costly than de novo synthesis. In Prochlorococcus marinus (strain AS9601), this protein is Adenine phosphoribosyltransferase.